The chain runs to 65 residues: MLILTRKVGESIVINDDIKVTILGVKGMQVRIGIDAPKDVQVHREEIFKRIQAGSPAPEKHEDTH.

Belongs to the CsrA/RsmA family. As to quaternary structure, homodimer; the beta-strands of each monomer intercalate to form a hydrophobic core, while the alpha-helices form wings that extend away from the core.

It localises to the cytoplasm. A key translational regulator that binds mRNA to regulate translation initiation and/or mRNA stability. Mediates global changes in gene expression, shifting from rapid growth to stress survival by linking envelope stress, the stringent response and the catabolite repression systems. Usually binds in the 5'-UTR; binding at or near the Shine-Dalgarno sequence prevents ribosome-binding, repressing translation, binding elsewhere in the 5'-UTR can activate translation and/or stabilize the mRNA. Its function is antagonized by small RNA(s). In Pseudomonas putida (strain ATCC 47054 / DSM 6125 / CFBP 8728 / NCIMB 11950 / KT2440), this protein is Translational regulator CsrA.